The primary structure comprises 186 residues: MYSYIKGKVVNNGQNFVIVDNNNIGYHIIVSNPYFYEINKEYKFFVHFHIKENLQILYGFNDNKNLLFFKKLLDVPTIGPKSALMLSETDNLEQVFQAIENNDNVYLRKFPGIGIKSAQQIILKLKGDLIFSEKIILNPKKTELEKILLNLGFVKKEIKSVLNQIDDKKELELMLKEVLLKLAKNI.

The domain I stretch occupies residues 1 to 61 (MYSYIKGKVV…ENLQILYGFN (61 aa)). The tract at residues 62-134 (DNKNLLFFKK…LKGDLIFSEK (73 aa)) is domain II. The segment at 134-135 (KI) is flexible linker. Residues 136-186 (ILNPKKTELEKILLNLGFVKKEIKSVLNQIDDKKELELMLKEVLLKLAKNI) form a domain III region.

The protein belongs to the RuvA family. In terms of assembly, homotetramer. Forms an RuvA(8)-RuvB(12)-Holliday junction (HJ) complex. HJ DNA is sandwiched between 2 RuvA tetramers; dsDNA enters through RuvA and exits via RuvB. An RuvB hexamer assembles on each DNA strand where it exits the tetramer. Each RuvB hexamer is contacted by two RuvA subunits (via domain III) on 2 adjacent RuvB subunits; this complex drives branch migration. In the full resolvosome a probable DNA-RuvA(4)-RuvB(12)-RuvC(2) complex forms which resolves the HJ.

The protein localises to the cytoplasm. Its function is as follows. The RuvA-RuvB-RuvC complex processes Holliday junction (HJ) DNA during genetic recombination and DNA repair, while the RuvA-RuvB complex plays an important role in the rescue of blocked DNA replication forks via replication fork reversal (RFR). RuvA specifically binds to HJ cruciform DNA, conferring on it an open structure. The RuvB hexamer acts as an ATP-dependent pump, pulling dsDNA into and through the RuvAB complex. HJ branch migration allows RuvC to scan DNA until it finds its consensus sequence, where it cleaves and resolves the cruciform DNA. The polypeptide is Holliday junction branch migration complex subunit RuvA (Phytoplasma mali (strain AT)).